The sequence spans 316 residues: Epoxide hydrolase 3 (316 aa).

Positions 25 to 302 (PVVLLLHGFP…ACHFINQERP (278 aa)) constitute an AB hydrolase-1 domain. Aspartate 101 functions as the Nucleophile in the catalytic mechanism. Residue tyrosine 150 coordinates an epoxide. Residue tyrosine 230 is the Proton donor of the active site. The active-site Proton acceptor is histidine 295.

It belongs to the AB hydrolase superfamily. Epoxide hydrolase family. In terms of assembly, homodimer. In terms of tissue distribution, highly expressed in young fruits 15 days after anthesis (15-DAA).

The enzyme catalyses an epoxide + H2O = an ethanediol. The catalysed reaction is (24S)-24,25-epoxycucurbitadienol + H2O = (24R)-24,25-dihydroxycucurbitadienol. It participates in secondary metabolite biosynthesis; terpenoid biosynthesis. Epoxide hydrolase involved in the biosynthesis of cucurbitacin and mogroside tetracyclic triterpene natural products (e.g. siamenoside I and mogrosides IV, V and VI). Cucurbitacins have cytotoxic properties and exhibit deterrent taste as a defense barrier against herbivores. Mogrosides are nonsugar highly oxygenated compounds used as high-intensity zero-calorie sweeteners; they also possess pharmacological properties such as regulating immunity, lowering blood sugar and lipid levels, protecting the liver, and acting as antioxidants and antitumor agents. Catalyzes the hydrolysis of aromatic epoxide-containing substrates, such as the conversion of 24,25-epoxycucurbitadienol to 24,25-dihydroxycucurbitadienol. The protein is Epoxide hydrolase 3 of Siraitia grosvenorii (Monk's fruit).